The chain runs to 453 residues: Serine/threonine-protein phosphatase 2A regulatory subunit B'' subunit gamma (453 aa).

2 consecutive EF-hand domains span residues 273–308 and 341–376; these read PSAL…TMTN and KEPA…IQEL. Residues Asp-286, Asp-288, Asn-290, Met-292, and Glu-297 each coordinate Ca(2+).

Interacts with MCM3AP/GANP. Interacts with PPP5C, and the phosphatase 2A core enzyme composed of the PPP2CA catalytic subunit and the constant regulatory subunit PPP2R1A. Finds in a complex with ABCB1, TFPI2 and PPP2R3C; leading to the dephosphorylation of ABCB1. Ubiquitously expressed in brain and other tissues.

The protein localises to the nucleus. Its subcellular location is the cytoplasm. Its function is as follows. May regulate MCM3AP phosphorylation through phosphatase recruitment. May act as a negative regulator of ABCB1 expression and function through the dephosphorylation of ABCB1 by TFPI2/PPP2R3C complex. May play a role in the activation-induced cell death of B-cells. The sequence is that of Serine/threonine-protein phosphatase 2A regulatory subunit B'' subunit gamma (PPP2R3C) from Homo sapiens (Human).